We begin with the raw amino-acid sequence, 38 residues long: Large ribosomal subunit protein bL36 (38 aa).

It belongs to the bacterial ribosomal protein bL36 family.

In Buchnera aphidicola subsp. Cinara cedri (strain Cc), this protein is Large ribosomal subunit protein bL36.